A 96-amino-acid chain; its full sequence is Co-chaperonin GroES (96 aa).

This sequence belongs to the GroES chaperonin family. As to quaternary structure, heptamer of 7 subunits arranged in a ring. Interacts with the chaperonin GroEL.

The protein localises to the cytoplasm. Its function is as follows. Together with the chaperonin GroEL, plays an essential role in assisting protein folding. The GroEL-GroES system forms a nano-cage that allows encapsulation of the non-native substrate proteins and provides a physical environment optimized to promote and accelerate protein folding. GroES binds to the apical surface of the GroEL ring, thereby capping the opening of the GroEL channel. This Legionella pneumophila (strain Paris) protein is Co-chaperonin GroES.